The following is a 112-amino-acid chain: Putative pterin-4-alpha-carbinolamine dehydratase (112 aa).

Belongs to the pterin-4-alpha-carbinolamine dehydratase family.

It carries out the reaction (4aS,6R)-4a-hydroxy-L-erythro-5,6,7,8-tetrahydrobiopterin = (6R)-L-erythro-6,7-dihydrobiopterin + H2O. This Shewanella sp. (strain ANA-3) protein is Putative pterin-4-alpha-carbinolamine dehydratase.